A 160-amino-acid polypeptide reads, in one-letter code: Nucleotide-binding protein PSHAa2277 (160 aa).

The protein belongs to the YajQ family.

Its function is as follows. Nucleotide-binding protein. In Pseudoalteromonas translucida (strain TAC 125), this protein is Nucleotide-binding protein PSHAa2277.